Consider the following 794-residue polypeptide: Protein sel-1 homolog 1 (794 aa).

An N-terminal signal peptide occupies residues 1 to 21 (MRVRIGLTLLLCAVLLSLASA). The disordered stretch occupies residues 21 to 50 (ASSDEEGSQDESLDSKTTLTSDESVKDHTT). The tract at residues 22–737 (SSDEEGSQDE…DMFTQLDMDQ (716 aa)) is interaction with ERLEC1, OS9 and SYVN1. Over 22–738 (SSDEEGSQDE…MFTQLDMDQL (717 aa)) the chain is Lumenal. Acidic residues predominate over residues 23-32 (SDEEGSQDES). At S63 the chain carries Phosphoserine. Acidic residues predominate over residues 64-77 (EESELESSIQEEED). Residues 64–109 (EESELESSIQEEEDSLKSQEGESVTEDISFLESPNPENKDYEEPKK) are disordered. The Fibronectin type-II domain occupies 122–170 (AHGEPCHFPFLFLDKEYDECTSDGREDGRLWCATTYDYKADEKWGFCET). 2 disulfides stabilise this stretch: C127–C153 and C141–C168. Sel1-like repeat units lie at residues 183-218 (AEMM…SMNH), 219-254 (TKAL…EEGS), 255-290 (PKGQ…LGGN), 291-326 (LIAH…NHVA), 373-409 (VQAQ…NAGN), 410-446 (SHAM…DMGN), 447-482 (PVGQ…EQGW), 483-518 (VDGQ…QGGH), and 519-554 (ILAF…ERGR). N-linked (GlcNAc...) asparagine glycans are attached at residues N195 and N217. N-linked (GlcNAc...) asparagine glycosylation is present at N272. Residues 352–537 (NSGMLEEDLI…MHASGTGVMR (186 aa)) form an important for homodimerization and oligomerization region. A glycan (N-linked (GlcNAc...) asparagine) is linked at N431. N-linked (GlcNAc...) asparagine glycosylation is present at N608. 2 Sel1-like repeats span residues 627–662 (TVAR…EQQH) and 664–699 (AQAM…EASP). An interaction with SYVN1 region spans residues 643–723 (TDVDYETAFI…VVYFLQYIRE (81 aa)). The tract at residues 738–794 (LLGPEWDLYLMTIIALLLGTVIAYRQRQHQDMPAPRPPGPRPAPPQQEGPPEQQPPQ) is mediates retention in the endoplasmic reticulum. Residues 739-759 (LGPEWDLYLMTIIALLLGTVI) form a helical membrane-spanning segment. Over 760–794 (AYRQRQHQDMPAPRPPGPRPAPPQQEGPPEQQPPQ) the chain is Cytoplasmic. The segment at 766 to 794 (HQDMPAPRPPGPRPAPPQQEGPPEQQPPQ) is disordered. Pro residues predominate over residues 771–794 (APRPPGPRPAPPQQEGPPEQQPPQ).

It belongs to the sel-1 family. In terms of assembly, homodimer and homooligomer. May form a complex with ERLEC1, HSPA5, OS9, and SYVN1. Interacts with FOXRED2 and EDEM1. Interacts with LPL. Interacts with LMF1; may stabilize the complex formed by LPL and LMF1 and thereby promote the export of LPL dimers. Component of the HRD1 complex, which comprises at least SYNV1/HRD1, DERL1/2, FAM8A1, HERPUD1/HERP, OS9, SEL1L and UBE2J1. SYNV1 assembles with SEL1L and FAM8A1 through its transmembrane domains, but interaction with its cytoplasmic domain is required to confer stability to FAM8A1 and enhance recruitment of HERPUD1. The interaction with SYNV1/HRD1 is direct. As to quaternary structure, (Microbial infection) Interacts with human cytomegalovirus protein UL148. N-glycosylated. As to expression, highly expressed in pancreas.

The protein resides in the endoplasmic reticulum membrane. Plays a role in the endoplasmic reticulum quality control (ERQC) system also called ER-associated degradation (ERAD) involved in ubiquitin-dependent degradation of misfolded endoplasmic reticulum proteins. Enhances SYVN1 stability. Plays a role in LPL maturation and secretion. Required for normal differentiation of the pancreas epithelium, and for normal exocrine function and survival of pancreatic cells. May play a role in Notch signaling. This Homo sapiens (Human) protein is Protein sel-1 homolog 1.